The primary structure comprises 113 residues: MEGRVQLMKALLARPLRPAARRWRNPIPFPETFDGDTDRLPEFIVQTSSYMFVDENTFSNDALKVTFLITRLTGPALQWVIPYIKKESPLLSDYRGFLAEMKRVFGWEEDEDF.

This sequence belongs to the FAM127 family.

The polypeptide is Retrotransposon Gag-like protein 8B (RTL8B) (Homo sapiens (Human)).